We begin with the raw amino-acid sequence, 185 residues long: NADH-quinone oxidoreductase subunit B (185 aa).

[4Fe-4S] cluster contacts are provided by Cys-64, Cys-65, Cys-129, and Cys-159.

This sequence belongs to the complex I 20 kDa subunit family. NDH-1 is composed of 14 different subunits. Subunits NuoB, C, D, E, F, and G constitute the peripheral sector of the complex. [4Fe-4S] cluster is required as a cofactor.

It is found in the cell inner membrane. The enzyme catalyses a quinone + NADH + 5 H(+)(in) = a quinol + NAD(+) + 4 H(+)(out). In terms of biological role, NDH-1 shuttles electrons from NADH, via FMN and iron-sulfur (Fe-S) centers, to quinones in the respiratory chain. Couples the redox reaction to proton translocation (for every two electrons transferred, four hydrogen ions are translocated across the cytoplasmic membrane), and thus conserves the redox energy in a proton gradient. The protein is NADH-quinone oxidoreductase subunit B of Rhodospirillum rubrum (strain ATCC 11170 / ATH 1.1.1 / DSM 467 / LMG 4362 / NCIMB 8255 / S1).